A 172-amino-acid chain; its full sequence is uncharacterized protein (172 aa).

Transmembrane regions (helical) follow at residues 44-68, 86-110, and 117-135; these read VLVS…AALT, LASY…VFSL, and VVFI…VTLF.

The protein belongs to the chlamydial CPn_0442/CT_006/TC_0274 family.

It is found in the cell membrane. This is an uncharacterized protein from Chlamydia pneumoniae (Chlamydophila pneumoniae).